The following is a 338-amino-acid chain: Homeobox protein ceh-20 (338 aa).

The PBC domain occupies 4-187; the sequence is THPANLSELL…VMILRSRFLD (184 aa). The PBC-A stretch occupies residues 11–91; that stretch reads ELLDAVLKIN…EGVAGPDKGG (81 aa). The interval 94 to 187 is PBC-B; sequence GSDASGGDQA…VMILRSRFLD (94 aa). Residues 188–250 constitute a DNA-binding region (homeobox; TALE-type); it reads ARRKRRNFSK…NKRIRYKKNM (63 aa).

The protein belongs to the TALE/PBX homeobox family. In terms of assembly, interacts with Meis protein psa-3. Interacts with homeobox protein nob-1. In terms of tissue distribution, expressed in head dopaminergic neurons.

It is found in the nucleus. In terms of biological role, transcription factor that binds to the 5'-TGATNNAT(G/T)(G/A)-3' PBC/Hox lineage enhancer region of sem-2 to promote cell fate specification in the postembryonic mesoderm (also known as the M lineage). Required for the M lineage-specific expression of the transcription factor, mls-2. Required for asymmetric division of the T hypodermal cell, probably acting via the regulation of asymmetric expression of Meis protein psa-3 in concert with homeobox protein nob-1 and the Wnt-MAPK pathway. Has a role in the mig-13 pathway to promote the guidance, migration and positioning of Q neuroblasts and their descendants along the anteroposterior body axis and the anterior migration of BDU interneurons. Also required for normal vulval formation. Plays a role in regulating gene expression in dopaminergic neurons, acting in midbody PDE neurons, and acting redundantly with ceh-40 in head neurons. May activate dopamine pathway genes in concert with ETS domain-containing protein ast-1, and homeobox proteins ceh-43 and ceh-40. In Caenorhabditis elegans, this protein is Homeobox protein ceh-20.